The primary structure comprises 617 residues: MANSTGLQFTVKVGALPDTTFAVVDFELSEALNQPFALSLNLASSLPGIDFGAVLDQPCELLVWYEGELQRRVSGIVSRFAQGDTGFRRTRYQAEVRPALWRLGLRTNARIFQTQKPDAIIGTLLEEAGITDFAFALRHEHAVREYCVQYRESDLAFINRLAAEEGLFYFHEFEAGKHRVVFADDAGALTKGPELFFNLATQGLSEGAYVRRFRYAEAVSTAEVALKDYSFKTPAYGLLHNKMSSELDHQRETYQHFDYPGRFKQDPSGKAFTGYRLDALRAGAMTGEGESNAAELMPGSSFTLTEHPNPAFNLAWQVVAVTHSGQQPQALEEESGGEPTTLSNSFEVVKGTTTWRAAMPYKPMVDGPQIATVVGPAGEEIYCDEFGRIKLQFPWDRYGASDDQSSCWVRVSQGWAGGQYGLIAIPRIGHEVVVSFLEGDPDQPIVTGRTFHATNPSPYPLPASKTRTSLRTSTHKGAGFNELRFEDQAGQEEVFIHAQKDMNTVVLNNRSTSVNASHTENVGGDQTVVVQHNQTVSVKENQVTEIQGEQTVAVTQNRNTTVNDNESLQVKNNIAIQSQSGDILIATAGGFIAIDKDGNISITGKGLVLNGTRIDLN.

Disordered stretches follow at residues 325–344 and 449–469; these read GQQPQALEEESGGEPTTLSN and RTFHATNPSPYPLPASKTRTS.

It belongs to the VgrG protein family.

A Vgr protein that is probably part of a type VI secretion system (T6SS). May be required for export of proteins involved in Rhs-mediated cellular contact-dependent growth inhibition (CDI). The sequence is that of Putative type VI secretion system protein VgrGA (vgrGA) from Dickeya dadantii (strain 3937) (Erwinia chrysanthemi (strain 3937)).